Here is a 179-residue protein sequence, read N- to C-terminus: Small ribosomal subunit protein uS7 (179 aa).

It belongs to the universal ribosomal protein uS7 family. Part of the 30S ribosomal subunit. Contacts proteins S9 and S11. Cross-links to IF3 and the P and E site tRNAs.

One of the primary rRNA binding proteins, it binds directly to 16S rRNA where it nucleates assembly of the head domain of the 30S subunit. Is located at the subunit interface close to the decoding center, where it has been shown to contact mRNA. Has been shown to contact tRNA in both the P and E sites; it probably blocks exit of the E site tRNA. In terms of biological role, protein S7 is also a translational repressor protein; it regulates the expression of the str operon members to different degrees by binding to its mRNA. This chain is Small ribosomal subunit protein uS7 (rpsG), found in Escherichia coli (strain K12).